The sequence spans 411 residues: Multidrug resistance protein MdtA (411 aa).

A signal peptide spans 1–26; it reads MNNNKKTKKRFSLIIILLIVIAGAIA. Polar residues predominate over residues 35–55; that stretch reads SAPPVSKDTPTANTPNRSTAG. The disordered stretch occupies residues 35–64; that stretch reads SAPPVSKDTPTANTPNRSTAGSRRPPMPPV.

The protein belongs to the membrane fusion protein (MFP) (TC 8.A.1) family. As to quaternary structure, part of a tripartite efflux system composed of MdtA, MdtB and MdtC.

The protein localises to the cell inner membrane. The polypeptide is Multidrug resistance protein MdtA (Proteus mirabilis (strain HI4320)).